The primary structure comprises 594 residues: Potassium-transporting ATPase potassium-binding subunit (594 aa).

Helical transmembrane passes span 3–23 (ADFLGLLLLYLTILLCAAPLL), 67–87 (AVAMLVFNVLGVLAVYALQRL), 136–156 (ALTVQNFVSAATGIAVLIALV), 179–199 (LYVLLPLSFILALALVSQGVV), 287–307 (LEMLAILLIPAALCWTFGEMV), 314–334 (VAILAAMTVLFAGFAASAAYF), 415–435 (GLYGMLAFAILAVFIAGLMIG), 453–473 (VALVILATPALVLAGTAVAVL), 519–539 (VLLGLAMWFGRYTIIVAILAL), and 562–582 (LFVALLVGAVLLVGALTYVPA).

This sequence belongs to the KdpA family. The system is composed of three essential subunits: KdpA, KdpB and KdpC.

It is found in the cell inner membrane. In terms of biological role, part of the high-affinity ATP-driven potassium transport (or Kdp) system, which catalyzes the hydrolysis of ATP coupled with the electrogenic transport of potassium into the cytoplasm. This subunit binds the periplasmic potassium ions and delivers the ions to the membrane domain of KdpB through an intramembrane tunnel. The polypeptide is Potassium-transporting ATPase potassium-binding subunit (Bordetella parapertussis (strain 12822 / ATCC BAA-587 / NCTC 13253)).